We begin with the raw amino-acid sequence, 288 residues long: Acetyl-coenzyme A carboxylase carboxyl transferase subunit beta (288 aa).

The CoA carboxyltransferase N-terminal domain maps to 34-288 (LFAKCPACKH…HLVAFHGGVS (255 aa)). Residues Cys38, Cys41, Cys56, and Cys59 each coordinate Zn(2+). The C4-type zinc finger occupies 38-59 (CPACKHMIYQKDLGPAKICPTC).

Belongs to the AccD/PCCB family. As to quaternary structure, acetyl-CoA carboxylase is a heterohexamer composed of biotin carboxyl carrier protein (AccB), biotin carboxylase (AccC) and two subunits each of ACCase subunit alpha (AccA) and ACCase subunit beta (AccD). Zn(2+) serves as cofactor.

Its subcellular location is the cytoplasm. It carries out the reaction N(6)-carboxybiotinyl-L-lysyl-[protein] + acetyl-CoA = N(6)-biotinyl-L-lysyl-[protein] + malonyl-CoA. Its pathway is lipid metabolism; malonyl-CoA biosynthesis; malonyl-CoA from acetyl-CoA: step 1/1. Component of the acetyl coenzyme A carboxylase (ACC) complex. Biotin carboxylase (BC) catalyzes the carboxylation of biotin on its carrier protein (BCCP) and then the CO(2) group is transferred by the transcarboxylase to acetyl-CoA to form malonyl-CoA. This chain is Acetyl-coenzyme A carboxylase carboxyl transferase subunit beta, found in Streptococcus equi subsp. zooepidemicus (strain MGCS10565).